A 101-amino-acid chain; its full sequence is Urease subunit beta (101 aa).

It belongs to the urease beta subunit family. Heterotrimer of UreA (gamma), UreB (beta) and UreC (alpha) subunits. Three heterotrimers associate to form the active enzyme.

The protein localises to the cytoplasm. The catalysed reaction is urea + 2 H2O + H(+) = hydrogencarbonate + 2 NH4(+). Its pathway is nitrogen metabolism; urea degradation; CO(2) and NH(3) from urea (urease route): step 1/1. The sequence is that of Urease subunit beta from Sinorhizobium medicae (strain WSM419) (Ensifer medicae).